Reading from the N-terminus, the 189-residue chain is Insecticyanin-A (189 aa).

Intrachain disulfides connect C9-C119 and C43-C175.

The protein belongs to the calycin superfamily. Lipocalin family. Homotetramer. As to expression, synthesized only in the caterpillars, apparently by the epidermis and secreted into the hemolymph. The protein is passed over from the larval hemolymph to that of pupae and adults and is sequestered in the eggs.

Its subcellular location is the secreted. Its function is as follows. This protein binds a chromophore: biliverdin IX, isomer gamma. Mixed with lipoprotein-bound carotenes, this blue protein provides hornworms with their green cryptic coloration which serves a camouflage. The sequence is that of Insecticyanin-A (INSA) from Manduca sexta (Tobacco hawkmoth).